The following is a 185-amino-acid chain: Ubiquitin-fold modifier-conjugating enzyme 1 (185 aa).

Catalysis depends on Cys119, which acts as the Glycyl thioester intermediate.

It belongs to the ubiquitin-conjugating enzyme family. UFC1 subfamily.

In terms of biological role, E2-like enzyme which forms an intermediate with UFM1 via a thioester linkage. The polypeptide is Ubiquitin-fold modifier-conjugating enzyme 1 (Oryza sativa subsp. japonica (Rice)).